The primary structure comprises 345 residues: 3-isopropylmalate dehydrogenase (345 aa).

Substrate contacts are provided by R94, R104, R130, and D215. Mg(2+) is bound by residues D215, D239, and D243. 273–285 (GSAPDIAGKGIAN) lines the NAD(+) pocket.

It belongs to the isocitrate and isopropylmalate dehydrogenases family. LeuB type 1 subfamily. As to quaternary structure, homodimer. The cofactor is Mg(2+). Mn(2+) serves as cofactor.

It localises to the cytoplasm. The catalysed reaction is (2R,3S)-3-isopropylmalate + NAD(+) = 4-methyl-2-oxopentanoate + CO2 + NADH. It participates in amino-acid biosynthesis; L-leucine biosynthesis; L-leucine from 3-methyl-2-oxobutanoate: step 3/4. In terms of biological role, catalyzes the oxidation of 3-carboxy-2-hydroxy-4-methylpentanoate (3-isopropylmalate) to 3-carboxy-4-methyl-2-oxopentanoate. The product decarboxylates to 4-methyl-2 oxopentanoate. The chain is 3-isopropylmalate dehydrogenase (leuB) from Lactococcus lactis subsp. lactis (strain IL1403) (Streptococcus lactis).